The sequence spans 463 residues: Argininosuccinate lyase (463 aa).

This sequence belongs to the lyase 1 family. Argininosuccinate lyase subfamily.

The protein localises to the cytoplasm. It catalyses the reaction 2-(N(omega)-L-arginino)succinate = fumarate + L-arginine. It functions in the pathway amino-acid biosynthesis; L-arginine biosynthesis; L-arginine from L-ornithine and carbamoyl phosphate: step 3/3. This Ruegeria pomeroyi (strain ATCC 700808 / DSM 15171 / DSS-3) (Silicibacter pomeroyi) protein is Argininosuccinate lyase.